The sequence spans 99 residues: A-type ATP synthase subunit F (99 aa).

Belongs to the V-ATPase F subunit family. Has multiple subunits with at least A(3), B(3), C, D, E, F, H, I and proteolipid K(x).

It is found in the cell membrane. In terms of biological role, component of the A-type ATP synthase that produces ATP from ADP in the presence of a proton gradient across the membrane. The polypeptide is A-type ATP synthase subunit F (Methanothrix thermoacetophila (strain DSM 6194 / JCM 14653 / NBRC 101360 / PT) (Methanosaeta thermophila)).